A 200-amino-acid chain; its full sequence is Beta-1,6-glucan synthesis-associated protein KEG1 (200 aa).

At 1-15 (MAGIKLTHKLYQYYQ) the chain is on the lumenal side. The helical transmembrane segment at 16-36 (LATSFLYAALLIRWLILMPLV) threads the bilayer. Over 37–44 (GSRFLPGG) the chain is Cytoplasmic. A helical transmembrane segment spans residues 45 to 65 (IHEFLIYLMFYSSIMEVIWLL). The Lumenal segment spans residues 66 to 82 (RFHGFKYGLLSRTFLKD). A helical membrane pass occupies residues 83–103 (LNFIYLVSVIHFYDDYEHALI). Residues 104–145 (LKNASYSSFIISLSLSQAYCHWCKLFKRKGVKERTLVWKVNT) are Cytoplasmic-facing. The chain crosses the membrane as a helical span at residues 146-166 (FVTLPILYLSEFALLLLNIQV). Topologically, residues 167-173 (KNYHSTP) are lumenal. Residues 174–194 (TLDIINRVVLLAYFPVLLTAY) traverse the membrane as a helical segment. Residues 195–200 (KKLLTK) lie on the Cytoplasmic side of the membrane.

In terms of assembly, interacts with KRE6.

The protein localises to the endoplasmic reticulum membrane. Its function is as follows. Involved in the biosynthesis of (1-&gt;6)-beta-D-glucan polymers of the cell wall. Required for viability. Involved in maintaining chromosome stability. The polypeptide is Beta-1,6-glucan synthesis-associated protein KEG1 (KEG1) (Saccharomyces cerevisiae (strain ATCC 204508 / S288c) (Baker's yeast)).